The chain runs to 293 residues: Protein PET54 (293 aa).

It localises to the mitochondrion inner membrane. Functionally, activator of specific mitochondrial mRNAs. PET54 is involved in the excision of intron aI5-beta from pre-mRNA for cytochrome c oxidase I (COX1) and plays a role in promoting the translation of COX3. This chain is Protein PET54 (PET54), found in Saccharomyces cerevisiae (strain ATCC 204508 / S288c) (Baker's yeast).